Consider the following 190-residue polypeptide: Tegument antigen (190 aa).

EF-hand domains are found at residues 8 to 43 (SQMEEFIRAFLEIDADSNEMIDKQELIKYCQKYRLD) and 51 to 77 (IARFDTDKDNKISIEEFCRGFGLKVSE). Ca(2+)-binding residues include Asp55, Asp57, Asp59, Lys61, and Glu66.

As to expression, adult and schistosomula tegument.

This is Tegument antigen from Schistosoma mansoni (Blood fluke).